Consider the following 576-residue polypeptide: Proline--tRNA ligase (576 aa).

This sequence belongs to the class-II aminoacyl-tRNA synthetase family. ProS type 1 subfamily. As to quaternary structure, homodimer.

It is found in the cytoplasm. It carries out the reaction tRNA(Pro) + L-proline + ATP = L-prolyl-tRNA(Pro) + AMP + diphosphate. Functionally, catalyzes the attachment of proline to tRNA(Pro) in a two-step reaction: proline is first activated by ATP to form Pro-AMP and then transferred to the acceptor end of tRNA(Pro). As ProRS can inadvertently accommodate and process non-cognate amino acids such as alanine and cysteine, to avoid such errors it has two additional distinct editing activities against alanine. One activity is designated as 'pretransfer' editing and involves the tRNA(Pro)-independent hydrolysis of activated Ala-AMP. The other activity is designated 'posttransfer' editing and involves deacylation of mischarged Ala-tRNA(Pro). The misacylated Cys-tRNA(Pro) is not edited by ProRS. This Thiobacillus denitrificans (strain ATCC 25259 / T1) protein is Proline--tRNA ligase.